The chain runs to 224 residues: MLRHITFTVFITTSMNTLATGMVPETSVLLVDEKRGEASINIKNTDDHPSLLYTTIVDLPESNKSIRLIPTQPVIRVEAGQVQQVRFLLQATVPLQSEELKRVTFEGIPPKDDKSSRVTVSIRQDLPVLIHPASLPEERETWKFLEWRKNGDQIEISNPSNYVVRMTLQFKTLPSGKTGAINKTYFLPHTSTTTALTNATDTKVEFYPASRYGYRGNKYVTDLK.

Positions 1–19 (MLRHITFTVFITTSMNTLA) are cleaved as a signal peptide.

Belongs to the periplasmic pilus chaperone family.

It is found in the periplasm. Could be required for the biogenesis of a putative fimbria. This is an uncharacterized protein from Escherichia coli (strain K12).